The primary structure comprises 542 residues: Chaperonin GroEL (542 aa).

ATP contacts are provided by residues 29–32 (TLGP), 86–90 (DGTTT), Gly-413, and Asp-493.

This sequence belongs to the chaperonin (HSP60) family. In terms of assembly, forms a cylinder of 14 subunits composed of two heptameric rings stacked back-to-back. Interacts with the co-chaperonin GroES.

The protein resides in the cytoplasm. The catalysed reaction is ATP + H2O + a folded polypeptide = ADP + phosphate + an unfolded polypeptide.. Its function is as follows. Together with its co-chaperonin GroES, plays an essential role in assisting protein folding. The GroEL-GroES system forms a nano-cage that allows encapsulation of the non-native substrate proteins and provides a physical environment optimized to promote and accelerate protein folding. The polypeptide is Chaperonin GroEL (Elusimicrobium minutum (strain Pei191)).